The sequence spans 307 residues: 4-hydroxythreonine-4-phosphate dehydrogenase (307 aa).

Substrate is bound by residues histidine 126 and threonine 127. The a divalent metal cation site is built by histidine 156, histidine 195, and histidine 251. Residues lysine 259, asparagine 268, and arginine 277 each contribute to the substrate site.

This sequence belongs to the PdxA family. Homodimer. Zn(2+) serves as cofactor. Mg(2+) is required as a cofactor. It depends on Co(2+) as a cofactor.

The protein localises to the cytoplasm. It catalyses the reaction 4-(phosphooxy)-L-threonine + NAD(+) = 3-amino-2-oxopropyl phosphate + CO2 + NADH. The protein operates within cofactor biosynthesis; pyridoxine 5'-phosphate biosynthesis; pyridoxine 5'-phosphate from D-erythrose 4-phosphate: step 4/5. Functionally, catalyzes the NAD(P)-dependent oxidation of 4-(phosphooxy)-L-threonine (HTP) into 2-amino-3-oxo-4-(phosphooxy)butyric acid which spontaneously decarboxylates to form 3-amino-2-oxopropyl phosphate (AHAP). This Helicobacter pylori (strain Shi470) protein is 4-hydroxythreonine-4-phosphate dehydrogenase.